Reading from the N-terminus, the 336-residue chain is Pentalenene synthase (336 aa).

Mg(2+) contacts are provided by Asp80, Asp84, Asn219, Ser223, and Glu227. The short motif at 80–84 (DDLFD) is the DDXXD motif element.

Belongs to the terpene synthase family. Monomer. Requires Mg(2+) as cofactor.

It catalyses the reaction (2E,6E)-farnesyl diphosphate = pentalenene + diphosphate. It functions in the pathway antibiotic biosynthesis; neopentalenolactone biosynthesis. Functionally, catalyzes the cyclization of farnesyl diphosphate (FPP) to the tricyclic sesquiterpene pentalenene in the biosynthesis of neopentalenolactone antibiotic. This Streptomyces avermitilis (strain ATCC 31267 / DSM 46492 / JCM 5070 / NBRC 14893 / NCIMB 12804 / NRRL 8165 / MA-4680) protein is Pentalenene synthase (ptlA).